We begin with the raw amino-acid sequence, 421 residues long: Histidine--tRNA ligase (421 aa).

Belongs to the class-II aminoacyl-tRNA synthetase family. As to quaternary structure, homodimer.

The protein resides in the cytoplasm. It catalyses the reaction tRNA(His) + L-histidine + ATP = L-histidyl-tRNA(His) + AMP + diphosphate + H(+). In Ureaplasma urealyticum serovar 10 (strain ATCC 33699 / Western), this protein is Histidine--tRNA ligase.